Reading from the N-terminus, the 543-residue chain is MNSHSYNGSVGRPLGSGPGALGRDPPDPEAGHPPQPPHSPGLQVVVAKSEPARPSPGSPRGQPQDQDDDEDDEEDEAGRQRASGKPSNVGHRLGHRRALFEKRKRLSDYALIFGMFGIVVMVTETELSWGVYTKESLYSFALKCLISLSTAILLGLVVLYHAREIQLFMVDNGADDWRIAMTCERVFLISLELAVCAIHPVPGHYRFTWTARLAFTYAPSVAEADVDVLLSIPMFLRLYLLGRVMLLHSKIFTDASSRSIGALNKITFNTRFVMKTLMTICPGTVLLVFSISSWIIAAWTVRVCERYHDKQEVTSNFLGAMWLISITFLSIGYGDMVPHTYCGKGVCLLTGIMGAGCTALVVAVVARKLELTKAEKHVHNFMMDTQLTKRVKNAAANVLRETWLIYKHTRLVKKPDQARVRKHQRKFLQAIHQAQKLRSVKIEQGKLNDQANTLTDLAKTQTVMYDLVSELHAQHEELEARLATLESRLDALGASLQALPGLIAQAIRPPPPPLPPRPGPGPQDQAARSSPCRWTPVAPSDCG.

The disordered stretch occupies residues M1–R92. The span at D65–E76 shows a compositional bias: acidic residues. The chain crosses the membrane as a helical span at residues L111–V131. The helical transmembrane segment at F140–Y160 threads the bilayer. A helical transmembrane segment spans residues I179 to H199. The chain crosses the membrane as a helical span at residues V228–H248. Residues L277–A297 traverse the membrane as a helical segment. An intramembrane region (pore-forming) is located at residues F317–V337. A helical membrane pass occupies residues V346–A366. Residues D384–V463 form a calmodulin-binding region. A disordered region spans residues Q505–G543. Residues R508–G521 are compositionally biased toward pro residues.

Belongs to the potassium channel KCNN family. KCa2.1/KCNN1 subfamily. As to quaternary structure, homodimer. Heteromultimer with KCNN2 and KCNN3. The complex is composed of 4 channel subunits each of which binds to a calmodulin subunit which regulates the channel activity through calcium-binding. Interacts with calmodulin.

Its subcellular location is the membrane. It is found in the cytoplasm. The protein localises to the myofibril. It localises to the sarcomere. The protein resides in the z line. The enzyme catalyses K(+)(in) = K(+)(out). Its activity is regulated as follows. Inhibited by bee venom neurotoxin apamin. Inhibited by d-tubocurarine and tetraethylammonium (TEA). Small conductance calcium-activated potassium channel that mediates the voltage-independent transmembrane transfer of potassium across the cell membrane through a constitutive interaction with calmodulin which binds the intracellular calcium allowing its opening. The current is characterized by a voltage-independent activation, an intracellular calcium concentration increase-dependent activation and a single-channel conductance of about 3 picosiemens. Also presents an inwardly rectifying current, thus reducing its already small outward conductance of potassium ions, which is particularly the case when the membrane potential displays positive values, above + 20 mV. Activation is followed by membrane hyperpolarization. Thought to regulate neuronal excitability by contributing to the slow component of synaptic afterhyperpolarization. This Homo sapiens (Human) protein is Small conductance calcium-activated potassium channel protein 1.